The sequence spans 94 residues: Co-chaperonin GroES (94 aa).

Positions 17–53 (DSNPNSPIQLPDSAKKKPTKGKVVSVGPGASNSDGKV) are disordered.

The protein belongs to the GroES chaperonin family. Heptamer of 7 subunits arranged in a ring. Interacts with the chaperonin GroEL.

The protein localises to the cytoplasm. Functionally, together with the chaperonin GroEL, plays an essential role in assisting protein folding. The GroEL-GroES system forms a nano-cage that allows encapsulation of the non-native substrate proteins and provides a physical environment optimized to promote and accelerate protein folding. GroES binds to the apical surface of the GroEL ring, thereby capping the opening of the GroEL channel. The chain is Co-chaperonin GroES from Anaplasma phagocytophilum (strain HZ).